A 418-amino-acid polypeptide reads, in one-letter code: Oxalate:formate antiporter (418 aa).

Transmembrane regions (helical) follow at residues 17-37, 48-68, 84-104, 108-128, 141-161, 172-192, 222-242, 250-270, 288-308, 311-331, 350-370, and 378-398; these read WFYLVLAVLLMCMISGVQYSW, LGVSLAAVQTAFTLSQVIQAG, IPLMFGGAMVLAGWTFMGMVD, ALYALYTLAGAGVGIVYGIAM, LASGFTAAGYGLGVLPFLPLI, AAFMYTGLIMGILIILIAFVI, FWVLWTAFFSVNFGGLLLVAN, LGLAAGVLTIGVSIQNLFNGG, MSVVFGINAVVLALFPTIAAL, VAFIAMLAIAFFTWGGSYALF, FFWAAKATASIFGGGLGAAIA, and AFLITAITSFIAFALATFVIP. Residue Lys355 coordinates oxalate.

The protein belongs to the major facilitator superfamily. OFA (TC 2.A.1.11) family. Monomer.

Its subcellular location is the cell inner membrane. Functionally, anion transporter that carries out the exchange of divalent oxalate with monovalent formate, the product of oxalate decarboxylation, at the plasma membrane, and in doing so catalyzes the vectorial portion of a proton-motive metabolic cycle that drives ATP synthesis. In Oxalobacter formigenes, this protein is Oxalate:formate antiporter (oxlT).